A 141-amino-acid polypeptide reads, in one-letter code: Small ribosomal subunit protein uS12 (141 aa).

This sequence belongs to the universal ribosomal protein uS12 family. Part of the 30S ribosomal subunit.

Functionally, with S4 and S5 plays an important role in translational accuracy. Located at the interface of the 30S and 50S subunits. The protein is Small ribosomal subunit protein uS12 of Methanothermobacter thermautotrophicus (strain ATCC 29096 / DSM 1053 / JCM 10044 / NBRC 100330 / Delta H) (Methanobacterium thermoautotrophicum).